We begin with the raw amino-acid sequence, 173 residues long: uncharacterized protein (173 aa).

Helical transmembrane passes span 9–29 (FSIC…LLCV), 32–52 (ICSA…TFFH), 100–120 (MFLC…SFIV), and 127–147 (FLFL…GLYP).

It is found in the membrane. This is an uncharacterized protein from Saccharomyces cerevisiae (strain ATCC 204508 / S288c) (Baker's yeast).